The following is a 121-amino-acid chain: UPF0295 protein BH0952 (121 aa).

Helical transmembrane passes span 12 to 32 and 41 to 61; these read IRTFALSLVFLGILVMYIGIF and VLAMILGFLCIIASTAVYFWI.

This sequence belongs to the UPF0295 family.

Its subcellular location is the cell membrane. This Halalkalibacterium halodurans (strain ATCC BAA-125 / DSM 18197 / FERM 7344 / JCM 9153 / C-125) (Bacillus halodurans) protein is UPF0295 protein BH0952.